We begin with the raw amino-acid sequence, 264 residues long: Thymidylate synthase (264 aa).

R21 lines the dUMP pocket. H51 contributes to the (6R)-5,10-methylene-5,6,7,8-tetrahydrofolate binding site. 126 to 127 (RR) provides a ligand contact to dUMP. C146 acts as the Nucleophile in catalysis. DUMP-binding positions include 166-169 (RSAD), N177, and 207-209 (HLY). Position 169 (D169) interacts with (6R)-5,10-methylene-5,6,7,8-tetrahydrofolate. Position 263 (A263) interacts with (6R)-5,10-methylene-5,6,7,8-tetrahydrofolate.

It belongs to the thymidylate synthase family. Bacterial-type ThyA subfamily. Homodimer.

The protein localises to the cytoplasm. The catalysed reaction is dUMP + (6R)-5,10-methylene-5,6,7,8-tetrahydrofolate = 7,8-dihydrofolate + dTMP. It participates in pyrimidine metabolism; dTTP biosynthesis. Catalyzes the reductive methylation of 2'-deoxyuridine-5'-monophosphate (dUMP) to 2'-deoxythymidine-5'-monophosphate (dTMP) while utilizing 5,10-methylenetetrahydrofolate (mTHF) as the methyl donor and reductant in the reaction, yielding dihydrofolate (DHF) as a by-product. This enzymatic reaction provides an intracellular de novo source of dTMP, an essential precursor for DNA biosynthesis. This chain is Thymidylate synthase, found in Chelativorans sp. (strain BNC1).